Consider the following 406-residue polypeptide: Phosphopentomutase (406 aa).

Positions 10, 305, 310, 346, 347, and 358 each coordinate Mn(2+).

The protein belongs to the phosphopentomutase family. It depends on Mn(2+) as a cofactor.

It localises to the cytoplasm. It catalyses the reaction 2-deoxy-alpha-D-ribose 1-phosphate = 2-deoxy-D-ribose 5-phosphate. It carries out the reaction alpha-D-ribose 1-phosphate = D-ribose 5-phosphate. Its pathway is carbohydrate degradation; 2-deoxy-D-ribose 1-phosphate degradation; D-glyceraldehyde 3-phosphate and acetaldehyde from 2-deoxy-alpha-D-ribose 1-phosphate: step 1/2. Functionally, isomerase that catalyzes the conversion of deoxy-ribose 1-phosphate (dRib-1-P) and ribose 1-phosphate (Rib-1-P) to deoxy-ribose 5-phosphate (dRib-5-P) and ribose 5-phosphate (Rib-5-P), respectively. In Sinorhizobium medicae (strain WSM419) (Ensifer medicae), this protein is Phosphopentomutase.